The primary structure comprises 500 residues: MTIFDNYEVWFVIGSQHLYGPETLRQVTQHAEHVVNALNTEAKLPCKLVLKPLGTTPDEITAICRDANYDDRCAGLVVWLHTFSPAKMWINGLTMLNKPLLQFHTQFNAALPWDSIDMDFMNLNQTAHGGREFGFIGARMRQQHAVVTGHWQDKQAHERIGSWMRQAVSKQDTRHLKVCRFGDNMREVAVTDGDKVAAQIKFGFSVNTWAVGDLVQVVNSISDGDVNALVDEYESCYTMTPATQIHGEKRQNVLEAARIELGMKRFLEQGGFHAFTTTFEDLHGLKQLPGLAVQRLMQQGYGFAGEGDWKTAALLRIMKVMSTGLQGGTSFMEDYTYHFEKDNDLVLGSHMLEVCPSIAVEEKPILDVQHLGIGGKDDPARLIFNTQTGPAIVASLIDLGDRYRLLVNCIDTVKTPHSLPKLPVANALWKAQPDLPTASEAWILAGGAHHTVFSHALNLNDMRQFAEMHDIEITVIDNDTRLPAFKDALRWNEVYYGFRR.

Mn(2+) contacts are provided by E306, E333, H350, and H450.

It belongs to the arabinose isomerase family. In terms of assembly, homohexamer. Requires Mn(2+) as cofactor.

It carries out the reaction beta-L-arabinopyranose = L-ribulose. Its pathway is carbohydrate degradation; L-arabinose degradation via L-ribulose; D-xylulose 5-phosphate from L-arabinose (bacterial route): step 1/3. Functionally, catalyzes the conversion of L-arabinose to L-ribulose. This is L-arabinose isomerase from Escherichia coli O7:K1 (strain IAI39 / ExPEC).